A 397-amino-acid chain; its full sequence is L-asparaginase-like protein GD25160 (397 aa).

The first 22 residues, 1 to 22, serve as a signal peptide directing secretion; sequence MLAQSCCLRLLILLLLFTSICS. 3 disulfide bridges follow: cysteine 90–cysteine 95, cysteine 189–cysteine 205, and cysteine 344–cysteine 371.

It belongs to the Ntn-hydrolase family.

The protein is L-asparaginase-like protein GD25160 of Drosophila simulans (Fruit fly).